The primary structure comprises 1846 residues: MYEGKKTKNMFLTRALEKILADKEVKKAHHSQLRKACEVALEEIKVETEKQSPPHGEAKAGSGTLPPVKSKTNFIEADKYFLPFELACQSKCPRIVSTSLDCLQKLIAYGHLTGRAPDSTTPGKKLIDRIIETICGCFQGPQTDEGVQLQIIKALLTAVTSQHIEIHEGTVLQAVRTCYNIYLASKNLINQTTAKATLTQMLNVIFARMENQALQEAKQMERERHRQQQHLLQSPVSHHEPESPHLRYLPPQTVDHINQEHEGDLEPQTHDVDKSLQDDTEPENGSDISSAENEQTEADQATAAETLSKNDILYDGDYEEKPLDIVQSIVEEMVNIIVGDMGEGMAISASTEGNTGTVEDGSDSENIQANGIPGTPISVAYTPSLPDDRLSVSSNDTQESGNSSGPSPGAKFSHILQKDAFLVFRSLCKLSMKPLSDGPPDPKSHELRSKILSLQLLLSILQNAGPVFRTNEMFINAIKQYLCVALSKNGVSSVPEVFELSLSIFLTLLSNFKTHLKMQIEVFFKEIFLYILETSTSSFDHKWMVIQTLTRICADAQSVVDIYVNYDCDLNAANIFERLVNDLSKIAQGRGSQELGMSNVQELSLRKKGLECLVSILKCMVEWSKDQYVNPNSQTTLGQEKPSEQEISEVKHPETINRYGSLNSLESTSSSGIGSYSTQMSGTDNPEQFEVLKQQKEIIEQGIDLFNKKPKRGIQYLQEQGMLGTTPEDIAQFLHQEERLDSTQVGEFLGDNDKFNKEVMYAYVDQHDFSGKDFVSALRLFLEGFRLPGEAQKIDRLMEKFAARYLECNQGQTLFASADTAYVLAYSIIMLTTDLHSPQVKNKMTKEQYIKMNRGINDSKDLPEEYLSAIYNEIAGKKISMKETKELTIPTKSTKQNVASEKQRRLLYNLEMEQMAKTAKALMEAVSHVQAPFTSATHLEHVRPMFKLAWTPFLAAFSVGLQDCDDTEVASLCLEGIRCAIRIACIFSIQLERDAYVQALARFTLLTVSSGITEMKQKNIDTIKTLITVAHTDGNYLGNSWHEILKCISQLELAQLIGTGVKPRYISGTVRGREGSLTGTKDQAPDEFVGLGLVGGNVDWKQIASIQESIGETSSQSVVVAVDRIFTGSTRLDGNAIVDFVRWLCAVSMDELLSTTHPRMFSLQKIVEISYYNMGRIRLQWSRIWEVIGDHFNKVGCNPNEDVAIFAVDSLRQLSMKFLEKGELANFRFQKDFLRPFEHIMKRNRSPTIRDMVVRCIAQMVNSQAANIRSGWKNIFSVFHLAASDQDESIVELAFQTTGHIVTLVFEKHFPATIDSFQDAVKCLSEFACNAAFPDTSMEAIRLIRHCAKYVSDRPQAFKEYTSDDMSVAPEDRVWVRGWFPILFELSCIINRCKLDVRTRGLTVMFEIMKTYGHTYEKHWWQDLFRIVFRIFDNMKLPEQQTEKAEWMTTTCNHALYAICDVFTQYLEVLSDVLLDDIFAQLYWCVQQDNEQLARSGTNCLENVVILNGEKFTLEIWDKTCNCTLDIFKTTIPHALLTWRPTSGEAEPPSPSAVSEKPLDAISQKSVDIHDSIQPRSSDNRQQAPLVSVSTVSEEVSKVKSTAKFPEQKLFAALLIKCVVQLELIQTIDNIVFFPATSKKEDAENLAAAQRDAVDFDVRVDTQDQGMYRFLTSQQLFKLLDCLLESHRFAKAFNSNNEQRTALWKAGFKGKSKPNLLKQETSSLACGLRILFRMYMDESRVSAWEEVQQRLLNVCREALSYFLTLTSESHREAWTNLLLLFLTKVLKISDSRFKAHASFYYPLLCEIMQFDLIPELRAVLRRFFLRIGIVFQISQPPEQELGINRQ.

The tract at residues 2-224 (YEGKKTKNMF…QEAKQMERER (223 aa)) is DCB; DCB:DCB domain and DCB:HUS domain interaction. Ser52 carries the post-translational modification Phosphoserine. 3 disordered regions span residues 216–249 (EAKQ…LRYL), 264–304 (DLEP…ATAA), and 347–410 (ISAS…SPGA). Residues 264-277 (DLEPQTHDVDKSLQ) are compositionally biased toward basic and acidic residues. Ser286, Ser289, and Ser290 each carry phosphoserine. 2 stretches are compositionally biased toward polar residues: residues 348–357 (SASTEGNTGT) and 391–406 (SVSS…SSGP). A phosphoserine mark is found at Ser394 and Ser407. The interval 554–574 (ADAQSVVDIYVNYDCDLNAAN) is HUS; DCB:HUS domain interaction. Residues 631–684 (PNSQTTLGQEKPSEQEISEVKHPETINRYGSLNSLESTSSSGIGSYSTQMSGTD) form a disordered region. Residues 641 to 655 (KPSEQEISEVKHPET) show a composition bias toward basic and acidic residues. Positions 661-681 (SLNSLESTSSSGIGSYSTQMS) are enriched in low complexity. An SEC7 domain is found at 688–877 (QFEVLKQQKE…SAIYNEIAGK (190 aa)). Positions 708-712 (KKPKR) match the Nuclear localization signal (NLS) motif. 3 positions are modified to phosphoserine: Ser1076, Ser1563, and Ser1566.

Homodimer. Interacts with ARFGEF2/BIG2; both proteins are probably part of the same or very similar macromolecular complexes. Interacts with FKBP2. Interacts with MYO9B. Interacts with PRKAR1A and PRKAR2A. Interacts with PPP1CC. Interacts with NCL, FBL, NUP62 and U3 small nucleolar RNA. Interacts with DPY30. Interacts with PDE3A. Interacts with KANK1. Interacts with TBC1D22A and TBC1D22B. Post-translationally, phosphorylated. In vitro phosphorylated by PKA reducing its GEF activity and dephosphorylated by phosphatase PP1.

It is found in the cytoplasm. It localises to the perinuclear region. Its subcellular location is the golgi apparatus. The protein resides in the trans-Golgi network. The protein localises to the nucleus. It is found in the nucleolus. It localises to the nucleus matrix. Its subcellular location is the membrane. With respect to regulation, inhibited by brefeldin A. Its function is as follows. Promotes guanine-nucleotide exchange on ARF1 and ARF3. Promotes the activation of ARF1/ARF3 through replacement of GDP with GTP. Involved in vesicular trafficking. Required for the maintenance of Golgi structure; the function may be independent of its GEF activity. Required for the maturation of integrin beta-1 in the Golgi. Involved in the establishment and persistence of cell polarity during directed cell movement in wound healing. Proposed to act as A kinase-anchoring protein (AKAP) and may mediate crosstalk between Arf and PKA pathways. Inhibits GAP activity of MYO9B probably through competitive RhoA binding. The function in the nucleus remains to be determined. In Mus musculus (Mouse), this protein is Brefeldin A-inhibited guanine nucleotide-exchange protein 1 (Arfgef1).